A 275-amino-acid chain; its full sequence is Phosphonoacetaldehyde hydrolase (275 aa).

The active-site Nucleophile is aspartate 15. Residues aspartate 15 and alanine 17 each contribute to the Mg(2+) site. Residue lysine 56 is the Schiff-base intermediate with substrate of the active site. Aspartate 189 is a Mg(2+) binding site.

It belongs to the HAD-like hydrolase superfamily. PhnX family. As to quaternary structure, homodimer. The cofactor is Mg(2+).

It carries out the reaction phosphonoacetaldehyde + H2O = acetaldehyde + phosphate + H(+). Functionally, involved in phosphonate degradation. The sequence is that of Phosphonoacetaldehyde hydrolase from Pseudomonas entomophila (strain L48).